The chain runs to 431 residues: Selenocysteine lyase (431 aa).

Residue lysine 239 is modified to N6-(pyridoxal phosphate)lysine. Residue cysteine 367 is the S-selanylcysteine intermediate of the active site.

The protein belongs to the class-V pyridoxal-phosphate-dependent aminotransferase family. In terms of assembly, homodimer. The cofactor is pyridoxal 5'-phosphate.

It is found in the cytoplasm. The protein localises to the cytosol. The catalysed reaction is L-selenocysteine + AH2 = hydrogenselenide + L-alanine + A + H(+). Catalyzes the decomposition of L-selenocysteine to L-alanine and elemental selenium. The polypeptide is Selenocysteine lyase (scly) (Xenopus tropicalis (Western clawed frog)).